A 504-amino-acid chain; its full sequence is ATP-dependent RNA helicase DBP5 (504 aa).

Basic and acidic residues-rich tracts occupy residues 1-10 (MSATEDKKDP), 17-32 (LKLD…ETKT), and 41-85 (KTTE…ENKD). The interval 1 to 85 (MSATEDKKDP…DAKDERENKD (85 aa)) is disordered. A Q motif motif is present at residues 114–142 (KSFDELGLSPELLKGIYAMKFQKPSKIQE). In terms of domain architecture, Helicase ATP-binding spans 147–314 (LLLSNPPRNM…QKVIPNANTL (168 aa)). 160 to 167 (SQSGTGKT) contacts ATP. The short motif at 261–264 (DEAD) is the DEAD box element. One can recognise a Helicase C-terminal domain in the interval 325 to 502 (AIKQLYMDCN…EVEDIVKKVL (178 aa)).

The protein belongs to the DEAD box helicase family. DDX19/DBP5 subfamily. In terms of assembly, associates with the nuclear pore complex.

Its subcellular location is the cytoplasm. The protein localises to the nucleus. It localises to the nuclear pore complex. It is found in the nucleus membrane. It carries out the reaction ATP + H2O = ADP + phosphate + H(+). Functionally, ATP-dependent RNA helicase associated with the nuclear pore complex and essential for mRNA export from the nucleus. May participate in a terminal step of mRNA export through the removal of proteins that accompany mRNA through the nucleopore complex. May also be involved in early transcription. This is ATP-dependent RNA helicase DBP5 (DBP5) from Candida glabrata (strain ATCC 2001 / BCRC 20586 / JCM 3761 / NBRC 0622 / NRRL Y-65 / CBS 138) (Yeast).